The chain runs to 193 residues: Xanthine phosphoribosyltransferase (193 aa).

Leu-20 and Asn-27 together coordinate xanthine. 129–133 is a 5-phospho-alpha-D-ribose 1-diphosphate binding site; the sequence is ANGKA. Lys-157 contacts xanthine.

The protein belongs to the purine/pyrimidine phosphoribosyltransferase family. Xpt subfamily. Homodimer.

It localises to the cytoplasm. It catalyses the reaction XMP + diphosphate = xanthine + 5-phospho-alpha-D-ribose 1-diphosphate. Its pathway is purine metabolism; XMP biosynthesis via salvage pathway; XMP from xanthine: step 1/1. Converts the preformed base xanthine, a product of nucleic acid breakdown, to xanthosine 5'-monophosphate (XMP), so it can be reused for RNA or DNA synthesis. The sequence is that of Xanthine phosphoribosyltransferase from Bifidobacterium longum (strain NCC 2705).